A 1179-amino-acid chain; its full sequence is Probable manganese-transporting ATPase PDR2 (1179 aa).

Topologically, residues methionine 1–lysine 20 are cytoplasmic. A helical transmembrane segment spans residues glutamine 21–isoleucine 42. Residues valine 43–aspartate 50 lie on the Lumenal side of the membrane. A helical transmembrane segment spans residues alanine 51 to tryptophan 71. The Cytoplasmic segment spans residues serine 72–lysine 192. A helical transmembrane segment spans residues leucine 193–leucine 215. Residues aspartate 216 to phenylalanine 218 lie on the Lumenal side of the membrane. The chain crosses the membrane as a helical span at residues tryptophan 219–lysine 238. Residues serine 239–serine 402 lie on the Cytoplasmic side of the membrane. A helical membrane pass occupies residues glycine 403 to valine 422. Over lysine 423–leucine 435 the chain is Lumenal. Residues leucine 436–methionine 453 traverse the membrane as a helical segment. Residues glutamate 454–threonine 947 are Cytoplasmic-facing. Aspartate 491 (4-aspartylphosphate intermediate) is an active-site residue. Residues aspartate 812 and aspartate 816 each contribute to the Mg(2+) site. A disordered region spans residues lysine 833–arginine 880. A helical membrane pass occupies residues leucine 948–valine 967. At methionine 968–glutamine 979 the chain is on the lumenal side. The chain crosses the membrane as a helical span at residues alanine 980 to alanine 997. The Cytoplasmic portion of the chain corresponds to arginine 998–phenylalanine 1013. A helical transmembrane segment spans residues serine 1014–tyrosine 1034. Residues serine 1035–valine 1059 lie on the Lumenal side of the membrane. The chain crosses the membrane as a helical span at residues asparagine 1060–tyrosine 1079. Over methionine 1080–lysine 1092 the chain is Cytoplasmic. The helical transmembrane segment at proline 1093–serine 1110 threads the bilayer. At aspartate 1111 to glycine 1128 the chain is on the lumenal side. A helical membrane pass occupies residues leucine 1129–glutamate 1148. Residues arginine 1149–valine 1179 are Cytoplasmic-facing.

It belongs to the cation transport ATPase (P-type) (TC 3.A.3) family. Type V subfamily. In terms of tissue distribution, highly expressed in root meristem. Expressed in pavement cells of trichomes, stipules, stamens and pollen grains.

The protein resides in the endoplasmic reticulum membrane. It catalyses the reaction ATP + H2O = ADP + phosphate + H(+). Functionally, mediates manganese transport into the endoplasmic reticulum. The ATPase activity is required for cellular manganese homeostasis. Plays an important role in pollen and root development through its impact on protein secretion and transport processes. Functions together with LPR1 and LPR2 in a common pathway that adjusts root meristem activity to phosphate availability. Under phosphate limitation, restricts SHR movement in root meristem and is required for maintaining SCR expression in the root meristem stem-cell niche as well as for proximal meristem activity. Can complement the yeast spf1 mutant. This chain is Probable manganese-transporting ATPase PDR2 (PDR2), found in Arabidopsis thaliana (Mouse-ear cress).